Here is a 238-residue protein sequence, read N- to C-terminus: 3-dehydroquinate dehydratase (238 aa).

3-dehydroquinate is bound by residues 35–37 (ELR) and Arg-70. His-133 acts as the Proton donor/acceptor in catalysis. The active-site Schiff-base intermediate with substrate is the Lys-160. Positions 202 and 225 each coordinate 3-dehydroquinate.

Belongs to the type-I 3-dehydroquinase family. In terms of assembly, homodimer.

It carries out the reaction 3-dehydroquinate = 3-dehydroshikimate + H2O. Its pathway is metabolic intermediate biosynthesis; chorismate biosynthesis; chorismate from D-erythrose 4-phosphate and phosphoenolpyruvate: step 3/7. Functionally, involved in the third step of the chorismate pathway, which leads to the biosynthesis of aromatic amino acids. Catalyzes the cis-dehydration of 3-dehydroquinate (DHQ) and introduces the first double bond of the aromatic ring to yield 3-dehydroshikimate. The sequence is that of 3-dehydroquinate dehydratase from Staphylococcus aureus (strain Mu3 / ATCC 700698).